The chain runs to 309 residues: Homoserine O-succinyltransferase (309 aa).

Cysteine 142 (acyl-thioester intermediate) is an active-site residue. Residues lysine 163 and serine 192 each contribute to the substrate site. The active-site Proton acceptor is the histidine 235. Residue glutamate 237 is part of the active site. Arginine 249 provides a ligand contact to substrate.

This sequence belongs to the MetA family. Homodimer.

The protein localises to the cytoplasm. It catalyses the reaction L-homoserine + succinyl-CoA = O-succinyl-L-homoserine + CoA. The protein operates within amino-acid biosynthesis; L-methionine biosynthesis via de novo pathway; O-succinyl-L-homoserine from L-homoserine: step 1/1. Its function is as follows. Transfers a succinyl group from succinyl-CoA to L-homoserine, forming succinyl-L-homoserine. The protein is Homoserine O-succinyltransferase of Escherichia coli O139:H28 (strain E24377A / ETEC).